The following is a 239-amino-acid chain: Phospholipase A2 (239 aa).

Positions 1–19 (MSLIIVLVISVLSADAVLS) are cleaved as a signal peptide. Positions 20 to 105 (MDNELYLNLE…GRCLSVGESE (86 aa)) are excised as a propeptide. Residues Trp113, Gly115, and Gly117 each coordinate Ca(2+). Cystine bridges form between Cys114–Cys136, Cys135–Cys174, Cys142–Cys167, Cys165–Cys202, and Cys207–Cys217. His139 is an active-site residue. Residue Asp140 participates in Ca(2+) binding. Positions 211-213 (RSP) are excised as a propeptide.

It belongs to the phospholipase A2 family. Group III subfamily. Heterodimer composed of a small subunit and a large subunit; disulfid-linked. It depends on Ca(2+) as a cofactor. As to expression, expressed by the venom gland.

It localises to the secreted. The catalysed reaction is a 1,2-diacyl-sn-glycero-3-phosphocholine + H2O = a 1-acyl-sn-glycero-3-phosphocholine + a fatty acid + H(+). Toxic phospholipase A2, which may catalyze the calcium-dependent hydrolysis of the 2-acyl groups in 3-sn-phosphoglycerides. Inhibits both skeletal (RYR1) and cardiac (RYR2) ryanodine receptors (calcium release channels). Probably blocks ryanodine receptors by generating a lipid product. This is Phospholipase A2 from Hoffmannihadrurus gertschi (Scorpion).